Reading from the N-terminus, the 191-residue chain is GDP-mannose pyrophosphatase (191 aa).

GDP-alpha-D-mannose-binding positions include tyrosine 17, 38 to 40 (KRE), arginine 67, and 85 to 87 (AGL). Residues 43–180 (DRGNGATILL…EIRDGKTVLL (138 aa)) form the Nudix hydrolase domain. Mg(2+) contacts are provided by alanine 85, glutamate 100, and glutamate 104. The Nudix box signature appears at 86 to 106 (GLLDNDEPEVCIRKEAIEETG). GDP-alpha-D-mannose contacts are provided by residues glutamate 104, glutamate 127, 150–151 (DE), and lysine 176. Glutamate 151 serves as a coordination point for Mg(2+).

Belongs to the Nudix hydrolase family. NudK subfamily. In terms of assembly, homodimer. Mg(2+) serves as cofactor.

It carries out the reaction GDP-alpha-D-mannose + H2O = alpha-D-mannose 1-phosphate + GMP + 2 H(+). In terms of biological role, nucleoside diphosphate sugar hydrolase that hydrolyzes GDP-mannose as its preferred substrate, yielding GMP and mannose-1-phosphate. This chain is GDP-mannose pyrophosphatase (nudK), found in Salmonella choleraesuis (strain SC-B67).